We begin with the raw amino-acid sequence, 799 residues long: Oxygen sensor protein DosP (799 aa).

Residues 10 to 81 (ADGIFFPALE…YIRHNREGGK (72 aa)) enclose the PAS 1 domain. The heme site is built by H69 and M87. One can recognise a PAS 2 domain in the interval 134–207 (QTRQLIIAVD…LQQLLWKTAR (74 aa)). Residues 208–260 (DQDEFLLLTRTGEKIWIKASISPVYDVLAHLQNLVMTFSDITEERQIRQLEGN) enclose the PAC domain. The GGDEF domain occupies 402 to 532 (VSPVVYLIGV…GGNGWQFFSP (131 aa)). The EAL domain maps to 541 to 795 (RLVLGAALKE…EIPGWMSSVL (255 aa)).

As to quaternary structure, homodimer; has been previously suggested to be a homotetramer based on size exclusion chromatography. Forms a complex with DosC. The cofactor is heme. Mg(2+) serves as cofactor. Post-translationally, the heme distal ligand is coordinated by Met-87 in the active Fe(2+) (ferrous) form, by O(2) in the O(2)-bound form and by H(2)O in the inactive Fe(3+) (ferric) form.

It carries out the reaction 3',3'-c-di-GMP + H2O = 5'-phosphoguanylyl(3'-&gt;5')guanosine + H(+). Its activity is regulated as follows. Has c-di-GMP PDE activity in both Fe(2+) and Fe(3+)-bound forms; this activity is increased 6-7 fold by binding of O(2) and CO and NO. Has cAMP PDE activity only when the heme is in the Fe(2+) form. cAMP PDE activity is inhibited by oxidation of the heme iron and by binding of external ligands such as CO and NO. Also strongly inhibited by etazolate hydrochloride, a selective cAMP PDE inhibitor. PDE activity is inhibited in the absence of oxygen. Its function is as follows. Heme-based oxygen sensor protein displaying phosphodiesterase (PDE) activity toward c-di-GMP in response to oxygen availability. Involved in the modulation of intracellular c-di-GMP levels, in association with DosC which catalyzes the biosynthesis of c-di-GMP (diguanylate cyclase activity). Cyclic-di-GMP is a second messenger which controls cell surface-associated traits in bacteria. Has very poor PDE activity on cAMP but is not active with cGMP, bis(p-nitrophenyl) phosphate or p-nitrophenyl phosphate. Via its PDE activity on c-di-GMP, DosP regulates biofilm formation through the repression of transcription of the csgBAC operon, which encodes curli structural subunits. The sequence is that of Oxygen sensor protein DosP (dosP) from Escherichia coli (strain K12).